The primary structure comprises 165 residues: Transcription antitermination protein NusB (165 aa).

The protein belongs to the NusB family.

In terms of biological role, involved in transcription antitermination. Required for transcription of ribosomal RNA (rRNA) genes. Binds specifically to the boxA antiterminator sequence of the ribosomal RNA (rrn) operons. The sequence is that of Transcription antitermination protein NusB from Rhodococcus erythropolis (strain PR4 / NBRC 100887).